The primary structure comprises 559 residues: Terpene synthase 1 (559 aa).

Mg(2+) is bound by residues D312, D316, D456, and E464. A DDXXD motif motif is present at residues 312–316 (DDLYD).

It belongs to the terpene synthase family. Tpsa subfamily. The cofactor is Mg(2+). It depends on Mn(2+) as a cofactor. Mostly expressed in stems and, to a lower extent, in leaves, roots and fruits.

It catalyses the reaction (2E,6E)-farnesyl diphosphate = (-)-(E)-beta-caryophyllene + diphosphate. The enzyme catalyses (2E,6E)-farnesyl diphosphate = alpha-humulene + diphosphate. The protein operates within secondary metabolite biosynthesis; terpenoid biosynthesis. Its function is as follows. Sesquiterpene synthase involved in the biosynthesis of volatile compounds that contribute to the characteristic flavors of black pepper. Mediates the conversion of (2E,6E)-farnesyl diphosphate (FPP) into beta-caryophyllene and, as a minor compound, into alpha-humulene. The polypeptide is Terpene synthase 1 (Piper nigrum (Black pepper)).